The sequence spans 111 residues: Large ribosomal subunit protein eL33x (111 aa).

Belongs to the eukaryotic ribosomal protein eL33 family.

The protein is Large ribosomal subunit protein eL33x (RPL35AD) of Arabidopsis thaliana (Mouse-ear cress).